The following is a 367-amino-acid chain: Dihydroorotate dehydrogenase (quinone) (367 aa).

Residues 61-65 and Thr85 contribute to the FMN site; that span reads AGFDK. Lys65 lines the substrate pocket. 110–114 contributes to the substrate binding site; sequence NRMGF. FMN contacts are provided by Asn138 and Asn169. Asn169 contributes to the substrate binding site. Ser172 acts as the Nucleophile in catalysis. Asn174 contributes to the substrate binding site. FMN is bound by residues Lys212 and Thr240. Residue 241–242 participates in substrate binding; the sequence is NT. FMN is bound by residues Gly263, Gly292, and 313 to 314; that span reads YS.

It belongs to the dihydroorotate dehydrogenase family. Type 2 subfamily. In terms of assembly, monomer. FMN is required as a cofactor.

The protein localises to the cell membrane. It carries out the reaction (S)-dihydroorotate + a quinone = orotate + a quinol. The protein operates within pyrimidine metabolism; UMP biosynthesis via de novo pathway; orotate from (S)-dihydroorotate (quinone route): step 1/1. Its function is as follows. Catalyzes the conversion of dihydroorotate to orotate with quinone as electron acceptor. The chain is Dihydroorotate dehydrogenase (quinone) from Rhodospirillum rubrum (strain ATCC 11170 / ATH 1.1.1 / DSM 467 / LMG 4362 / NCIMB 8255 / S1).